We begin with the raw amino-acid sequence, 504 residues long: ATP synthase subunit alpha 1 (504 aa).

170–177 (GDRQIGKT) serves as a coordination point for ATP.

It belongs to the ATPase alpha/beta chains family. F-type ATPases have 2 components, CF(1) - the catalytic core - and CF(0) - the membrane proton channel. CF(1) has five subunits: alpha(3), beta(3), gamma(1), delta(1), epsilon(1). CF(0) has three main subunits: a(1), b(2) and c(9-12). The alpha and beta chains form an alternating ring which encloses part of the gamma chain. CF(1) is attached to CF(0) by a central stalk formed by the gamma and epsilon chains, while a peripheral stalk is formed by the delta and b chains.

Its subcellular location is the cell inner membrane. The enzyme catalyses ATP + H2O + 4 H(+)(in) = ADP + phosphate + 5 H(+)(out). Produces ATP from ADP in the presence of a proton gradient across the membrane. The alpha chain is a regulatory subunit. In Syntrophus aciditrophicus (strain SB), this protein is ATP synthase subunit alpha 1.